Reading from the N-terminus, the 701-residue chain is Elongation factor G (701 aa).

The region spanning 11 to 287 is the tr-type G domain; it reads TKVRNIGIMA…AVIDYLPSPL (277 aa). Residues 20–27, 84–88, and 138–141 contribute to the GTP site; these read AHIDAGKT, DTPGH, and NKMD.

It belongs to the TRAFAC class translation factor GTPase superfamily. Classic translation factor GTPase family. EF-G/EF-2 subfamily.

Its subcellular location is the cytoplasm. Functionally, catalyzes the GTP-dependent ribosomal translocation step during translation elongation. During this step, the ribosome changes from the pre-translocational (PRE) to the post-translocational (POST) state as the newly formed A-site-bound peptidyl-tRNA and P-site-bound deacylated tRNA move to the P and E sites, respectively. Catalyzes the coordinated movement of the two tRNA molecules, the mRNA and conformational changes in the ribosome. This chain is Elongation factor G, found in Mycobacterium ulcerans (strain Agy99).